The primary structure comprises 884 residues: Protein translocase subunit SecA (884 aa).

Residues glutamine 88, 106–110 (GEGKT), and aspartate 509 each bind ATP. Positions 822–884 (EQKKLKMSGA…PKKGLFANND (63 aa)) are disordered. Over residues 833 to 842 (KGGEDLEETK) the composition is skewed to basic and acidic residues. 4 residues coordinate Zn(2+): cysteine 858, cysteine 860, cysteine 869, and histidine 870.

The protein belongs to the SecA family. As to quaternary structure, monomer and homodimer. Part of the essential Sec protein translocation apparatus which comprises SecA, SecYEG and auxiliary proteins SecDF-YajC and YidC. It depends on Zn(2+) as a cofactor.

Its subcellular location is the cell inner membrane. It is found in the cytoplasm. It catalyses the reaction ATP + H2O + cellular proteinSide 1 = ADP + phosphate + cellular proteinSide 2.. In terms of biological role, part of the Sec protein translocase complex. Interacts with the SecYEG preprotein conducting channel. Has a central role in coupling the hydrolysis of ATP to the transfer of proteins into and across the cell membrane, serving as an ATP-driven molecular motor driving the stepwise translocation of polypeptide chains across the membrane. This chain is Protein translocase subunit SecA, found in Campylobacter hominis (strain ATCC BAA-381 / DSM 21671 / CCUG 45161 / LMG 19568 / NCTC 13146 / CH001A).